A 717-amino-acid chain; its full sequence is MLQTSKGSNSSSTSSSRSASISTATPNTIVEDEELLCGPKSELTPPAVANPLRPVSKSNTSVEDDSKPSFTYDLDVFNLCKEYLNTRNHHGLALIARQKGIPPILRFKVWPILLKSHPFVISPFIQPDSELLNESTSSRSNSSSSSSTGSNTPLSTAPGSIKDAAIIDGDANDNDNDSNSNSNDDDNDRDNNDANTKEKEEDEQNNKIREKIKRDLAKYIQRLKYSQSKYTVSETEHEILSILENAIMKFTLKWGKIIKYDSSLTWIALNLAEWFPPIPKTPWVLVGKEYSSSHQSLIVNFLDDYSNYIDNIPDLREYLERLIYHDEKISTISFREVYERLVLVLLHCPQPVSRRKKSDNQGQNQRRNQSEVQKDQQSFKVNKTTLPKTGGTIEERVSYFIYCLRKLIPELSQYFHEEQILTKFGCLDDEWLIWWLKFCGTKVWSKYDRGRIWDFMLGWRLKNPKRDFNYYYEKLNYVNRNTLEKLGPDIFWSVGNEEEDISGDNNVDANANEINNTEKTETGKLVKREGDIKRSSFKDLVNELSNELHISKRVSTDEVATSTSSPATTKMASSSSTSSTLTPNVSIPFSRVDPHVALIFISLSLLKSKENILVELDQHEIRQFLSRLPSKSYKYNQKRSTRQKRISYASNASSTSNSPMGQSPVDRDEDSIFPTSRIVISNDSKDQKHKVNFIDNIISEAGELWRKWLWSEMVEDN.

Composition is skewed to low complexity over residues 1–25 (MLQT…STAT) and 132–155 (LNES…TPLS). 6 disordered regions span residues 1–66 (MLQT…EDDS), 132–209 (LNES…NKIR), 353–377 (SRRK…KDQQ), 503–522 (GDNN…KTET), 555–583 (STDE…TLTP), and 636–670 (NQKR…RDED). Residues 100–460 (GIPPILRFKV…RIWDFMLGWR (361 aa)) form the Rab-GAP TBC domain. Over residues 189 to 209 (RDNNDANTKEKEEDEQNNKIR) the composition is skewed to basic and acidic residues. Low complexity-rich tracts occupy residues 504 to 515 (DNNVDANANEIN) and 560 to 582 (ATST…STLT). Residues 636–645 (NQKRSTRQKR) show a composition bias toward basic residues. Positions 647–658 (SYASNASSTSNS) are enriched in low complexity.

Belongs to the OCA5 family.

It localises to the cytoplasm. This chain is Oxidant-induced cell-cycle arrest protein 5 (OCA5), found in Candida albicans (strain WO-1) (Yeast).